A 327-amino-acid chain; its full sequence is Phosphate acyltransferase (327 aa).

Belongs to the PlsX family. Homodimer. Probably interacts with PlsY.

The protein localises to the cytoplasm. It catalyses the reaction a fatty acyl-[ACP] + phosphate = an acyl phosphate + holo-[ACP]. The protein operates within lipid metabolism; phospholipid metabolism. In terms of biological role, catalyzes the reversible formation of acyl-phosphate (acyl-PO(4)) from acyl-[acyl-carrier-protein] (acyl-ACP). This enzyme utilizes acyl-ACP as fatty acyl donor, but not acyl-CoA. This chain is Phosphate acyltransferase, found in Thermosipho africanus (strain TCF52B).